A 364-amino-acid polypeptide reads, in one-letter code: Trans-enoyl reductase sthE (364 aa).

Residue 51 to 54 (TDYK) participates in NADP(+) binding. 137–144 (WGTAALAI) contacts substrate. NADP(+)-binding positions include 172–175 (ATAT), 195–198 (SESS), Tyr213, and 261–262 (LE). 281–285 (GFEGQ) provides a ligand contact to substrate. Residue 351–352 (VK) participates in NADP(+) binding.

It belongs to the zinc-containing alcohol dehydrogenase family. In terms of assembly, monomer.

The enzyme catalyses 7 malonyl-CoA + acetyl-CoA + 10 AH2 + 5 S-adenosyl-L-methionine + 2 H(+) = dehydroprobetaenone I + 10 A + 5 S-adenosyl-L-homocysteine + 7 CO2 + 8 CoA + 6 H2O. The protein operates within mycotoxin biosynthesis. Trans-enoyl reductase; part of the gene cluster that mediates the biosynthesis of the phytotoxin stemphyloxin II. The first step of the pathway is the synthesis of dehydroprobetaenone I by the polyketide synthase sthA and the enoyl reductase sthE via condensation of one acetyl-CoA starter unit with 7 malonyl-CoA units and 5 methylations. The C-terminal reductase (R) domain of sthA catalyzes the reductive release of the polyketide chain. Because sthA lacks a designated enoylreductase (ER) domain, the required activity is provided the enoyl reductase sthE. The short-chain dehydrogenase/reductase sthC then catalyzes reduction of dehydroprobetaenone I to probetaenone I. The cytochrome P450 monooxygenase sthF catalyzes successive epoxidation, oxidation (resulting from epoxide opening) and hydroxylation to install a tertiary alcohol in the decaline ring to yield betaenone C from dehydroprobetaenone I and betaenone B from probetaenone I. The FAD-linked oxidoreductase sthB is responsible for the conversion of betaenone C to betaenone A via an intramolecular aldol reaction between C-1 and C-17 to form the bridged tricyclic system in betaenone A. Finally, the cytochrome P450 monooxygenase sthD catalyzes the hydroxylation of C-15 to afford the final metabolite stemphyloxin II. The chain is Trans-enoyl reductase sthE from Phaeosphaeria nodorum (strain SN15 / ATCC MYA-4574 / FGSC 10173) (Glume blotch fungus).